A 216-amino-acid polypeptide reads, in one-letter code: Octanoyltransferase (216 aa).

A BPL/LPL catalytic domain is found at 29–209 (DRAGECVWLL…SFDAVFGPCP (181 aa)). Residues 68–75 (RGGQYTYH), 140–142 (AIG), and 153–155 (GFA) contribute to the substrate site. C171 serves as the catalytic Acyl-thioester intermediate.

Belongs to the LipB family.

Its subcellular location is the cytoplasm. The enzyme catalyses octanoyl-[ACP] + L-lysyl-[protein] = N(6)-octanoyl-L-lysyl-[protein] + holo-[ACP] + H(+). Its pathway is protein modification; protein lipoylation via endogenous pathway; protein N(6)-(lipoyl)lysine from octanoyl-[acyl-carrier-protein]: step 1/2. Functionally, catalyzes the transfer of endogenously produced octanoic acid from octanoyl-acyl-carrier-protein onto the lipoyl domains of lipoate-dependent enzymes. Lipoyl-ACP can also act as a substrate although octanoyl-ACP is likely to be the physiological substrate. This is Octanoyltransferase from Rhodospirillum rubrum (strain ATCC 11170 / ATH 1.1.1 / DSM 467 / LMG 4362 / NCIMB 8255 / S1).